The following is a 726-amino-acid chain: Transferrin (726 aa).

The first 16 residues, Met-1–Ala-16, serve as a signal peptide directing secretion. Transferrin-like domains are found at residues Tyr-29–Thr-367 and Val-374–Ala-719. 2 cysteine pairs are disulfide-bonded: Cys-32–Cys-63 and Cys-41–Cys-54. Positions 78 and 111 each coordinate Fe(3+). Intrachain disulfides connect Cys-135–Cys-231, Cys-184–Cys-210, Cys-207–Cys-216, and Cys-274–Cys-287. Residues Thr-137, Arg-141, Val-143, and Gly-144 each coordinate hydrogencarbonate. Asn-162 is a glycosylation site (N-linked (GlcNAc...) asparagine). Residue Tyr-225 participates in Fe(3+) binding. Asn-337 and Asn-358 each carry an N-linked (GlcNAc...) asparagine glycan. 2 disulfides stabilise this stretch: Cys-377/Cys-414 and Cys-387/Cys-405. Residues Asp-429 and Tyr-457 each coordinate Fe(3+). Cys-481 and Cys-562 are disulfide-bonded. Residues Thr-483, Arg-487, Ala-489, and Gly-490 each contribute to the hydrogencarbonate site. 2 residues coordinate Fe(3+): Tyr-573 and His-642.

Belongs to the transferrin family.

It localises to the secreted. In terms of biological role, transferrins are iron binding transport proteins which bind Fe(3+) ion in association with the binding of an anion, usually bicarbonate. This is Transferrin from Blaberus discoidalis (Tropical cockroach).